A 182-amino-acid polypeptide reads, in one-letter code: uncharacterized protein (182 aa).

The protein localises to the plastid. The protein resides in the cyanelle. This is an uncharacterized protein from Cyanophora paradoxa.